Consider the following 140-residue polypeptide: Nucleoside diphosphate kinase (140 aa).

Residues lysine 10, phenylalanine 58, arginine 86, threonine 92, arginine 103, and asparagine 113 each contribute to the ATP site. The active-site Pros-phosphohistidine intermediate is histidine 116.

The protein belongs to the NDK family. Homotetramer. Mg(2+) serves as cofactor.

It localises to the cytoplasm. The catalysed reaction is a 2'-deoxyribonucleoside 5'-diphosphate + ATP = a 2'-deoxyribonucleoside 5'-triphosphate + ADP. It catalyses the reaction a ribonucleoside 5'-diphosphate + ATP = a ribonucleoside 5'-triphosphate + ADP. Its function is as follows. Major role in the synthesis of nucleoside triphosphates other than ATP. The ATP gamma phosphate is transferred to the NDP beta phosphate via a ping-pong mechanism, using a phosphorylated active-site intermediate. In Haemophilus influenzae (strain PittEE), this protein is Nucleoside diphosphate kinase.